Reading from the N-terminus, the 138-residue chain is Large ribosomal subunit protein uL16 (138 aa).

Belongs to the universal ribosomal protein uL16 family. As to quaternary structure, part of the 50S ribosomal subunit.

Its function is as follows. Binds 23S rRNA and is also seen to make contacts with the A and possibly P site tRNAs. The chain is Large ribosomal subunit protein uL16 from Corynebacterium kroppenstedtii (strain DSM 44385 / JCM 11950 / CIP 105744 / CCUG 35717).